The chain runs to 444 residues: Cop9 signalosome complex subunit 11 (444 aa).

The PCI domain maps to 195 to 367 (FFTMMTSEPL…IHFEDSSILQ (173 aa)). The disordered stretch occupies residues 419–439 (SSDDMDIDEVNDRSDISDSEG).

As to quaternary structure, component of a COP9 signalosome-like (CSN) complex, composed of RRI1/CSN5, CSN9, RRI2/CSN10, PCI8/CSN11, CSN12 and CSI1. Interacts with PRT1 and RPG1, 2 subunits of the core complex of translation initiation factor 3 (eIF3).

The protein localises to the cytoplasm. Its subcellular location is the nucleus. Its function is as follows. Component of the COP9 signalosome (CSN) complex that acts as an regulator of the ubiquitin (Ubl) conjugation pathway by mediating the deneddylation of the cullin subunit of SCF-type E3 ubiquitin-protein ligase complexes The CSN complex is involved in the regulation of the mating pheromone response. PCI8 may also be involved in transcriptional and translational control. The protein is Cop9 signalosome complex subunit 11 (PCI8) of Saccharomyces cerevisiae (strain ATCC 204508 / S288c) (Baker's yeast).